Reading from the N-terminus, the 376-residue chain is MWLILFMIVIGAVIGGVTNSLAIKMLFRPYSEKRIGRFRLPFTPGLIPKRHDELATQLGRMVVSYLVTSVGIGKKLTEASFTDSVTEWAKRESRKFLSSDQSLSSILHQNFQVEDSEKLVLQQVERWLETSYDRWFREANSRTIGMALPEVIVEKVERNLPAIRRMLLTKARDYVASDQGKAQLSVMIDRFLETHGTLGNMVSMFFSNERLVDKLHPELLKFLNDQETEKWLQKLLDNEWERLKEKPLADIQQYVEKEAVVRIGRQVLQTQVPVIQWLGKPLHAWTGPYEEKVAEEWVPKLVHVTIQLLVSQLDHMLERLHLEEIVREQVSAFSVERLEELVLSISRKEFKMITYLGALLGGGIGLVQSLIILLIK.

The next 2 helical transmembrane spans lie at 3–23 and 355–375; these read LILFMIVIGAVIGGVTNSLAI and YLGALLGGGIGLVQSLIILLI.

It belongs to the UPF0754 family.

It localises to the cell membrane. The sequence is that of UPF0754 membrane protein BH1148 from Halalkalibacterium halodurans (strain ATCC BAA-125 / DSM 18197 / FERM 7344 / JCM 9153 / C-125) (Bacillus halodurans).